A 186-amino-acid polypeptide reads, in one-letter code: uncharacterized protein (186 aa).

CBS domains are found at residues 10–69 (IMKK…KLPP) and 77–133 (ISSG…IIST).

This is an uncharacterized protein from Methanocaldococcus jannaschii (strain ATCC 43067 / DSM 2661 / JAL-1 / JCM 10045 / NBRC 100440) (Methanococcus jannaschii).